Consider the following 349-residue polypeptide: MVLAELNWLYGQPEATGILKASPEDFIVCEDLGFSPDGEGEHLMVHIRKTGCNTQFVADSLARFAGIPSRSVSYAGLKDRHAVTEQWFCLHLPGKQEPDFASFQLEGCEILTTARQKRKLRIGALKGNSFTLILREISHHQLVENRLRLIQQGGVPNYFGEQRFGRDGQNLIQAQRWANNEIRVKERSKRSFYLSASRSAMFNAVASARIALKQQQQVIKGDALQLTGRGSWFVADETELPLLQQRVIDGELQITAPLPGDGELGTQHQAADFERQYLQPYESLWELIKRERVEGCRRAILVQPQNLSWQWQDNDTVKISFWLPAGSFATSVVREIINQDQNNVTNIVE.

Phe-26 contacts substrate. Asp-79 (nucleophile) is an active-site residue. Asn-128 is a binding site for substrate. The TRUD domain occupies Gly-154–Val-302. Phe-328 provides a ligand contact to substrate.

Belongs to the pseudouridine synthase TruD family.

It carries out the reaction uridine(13) in tRNA = pseudouridine(13) in tRNA. Its function is as follows. Responsible for synthesis of pseudouridine from uracil-13 in transfer RNAs. The sequence is that of tRNA pseudouridine synthase D from Photorhabdus laumondii subsp. laumondii (strain DSM 15139 / CIP 105565 / TT01) (Photorhabdus luminescens subsp. laumondii).